The primary structure comprises 383 residues: Chaperone protein DnaJ (383 aa).

A J domain is found at 5-70 (DYYELLGVSR…QKRAAYDRFG (66 aa)). Residues 140 to 219 (GTKTEIRVPT…CSGAGTVPRE (80 aa)) form a CR-type zinc finger. Zn(2+) is bound by residues cysteine 153, cysteine 156, cysteine 171, cysteine 174, cysteine 193, cysteine 196, cysteine 207, and cysteine 210. CXXCXGXG motif repeat units lie at residues 153-160 (CDACSGTG), 171-178 (CPTCGGAG), 193-200 (CPTCGGAG), and 207-214 (CRVCSGAG).

It belongs to the DnaJ family. As to quaternary structure, homodimer. Requires Zn(2+) as cofactor.

It localises to the cytoplasm. Functionally, participates actively in the response to hyperosmotic and heat shock by preventing the aggregation of stress-denatured proteins and by disaggregating proteins, also in an autonomous, DnaK-independent fashion. Unfolded proteins bind initially to DnaJ; upon interaction with the DnaJ-bound protein, DnaK hydrolyzes its bound ATP, resulting in the formation of a stable complex. GrpE releases ADP from DnaK; ATP binding to DnaK triggers the release of the substrate protein, thus completing the reaction cycle. Several rounds of ATP-dependent interactions between DnaJ, DnaK and GrpE are required for fully efficient folding. Also involved, together with DnaK and GrpE, in the DNA replication of plasmids through activation of initiation proteins. The chain is Chaperone protein DnaJ from Acidiphilium cryptum (strain JF-5).